The chain runs to 273 residues: Proteasome subunit beta type-10 (273 aa).

N-acetylmethionine is present on Met-1. Positions Met-1–Gly-39 are cleaved as a propeptide — removed in mature form. The active-site Nucleophile is the Thr-40. Ser-230 bears the Phosphoserine mark.

Belongs to the peptidase T1B family. In terms of assembly, the 26S proteasome consists of a 20S proteasome core and two 19S regulatory subunits. The 20S proteasome core is composed of 28 subunits that are arranged in four stacked rings, resulting in a barrel-shaped structure. The two end rings are each formed by seven alpha subunits, and the two central rings are each formed by seven beta subunits. The catalytic chamber with the active sites is on the inside of the barrel. Component of the immunoproteasome, where it displaces the equivalent housekeeping subunit PSMB7. Component of the spermatoproteasome, a form of the proteasome specifically found in testis. In terms of processing, autocleaved. The resulting N-terminal Thr residue of the mature subunit is responsible for the nucleophile proteolytic activity.

The protein localises to the cytoplasm. It is found in the nucleus. It carries out the reaction Cleavage of peptide bonds with very broad specificity.. Its function is as follows. The proteasome is a multicatalytic proteinase complex which is characterized by its ability to cleave peptides with Arg, Phe, Tyr, Leu, and Glu adjacent to the leaving group at neutral or slightly basic pH. The proteasome has an ATP-dependent proteolytic activity. This subunit is involved in antigen processing to generate class I binding peptides. In Bos taurus (Bovine), this protein is Proteasome subunit beta type-10 (PSMB10).